We begin with the raw amino-acid sequence, 430 residues long: Long-chain specific acyl-CoA dehydrogenase, mitochondrial (430 aa).

The transit peptide at 1-30 directs the protein to the mitochondrion; sequence MAARLLRGSLRFLGGHCAARPLPALRCSHS. Lys-42 is modified (N6-acetyllysine). 2 positions are modified to phosphoserine: Ser-54 and Ser-55. N6-acetyllysine; alternate occurs at positions 66 and 81. Residues Lys-66 and Lys-81 each carry the N6-succinyllysine; alternate modification. Lys-92 and Lys-95 each carry N6-acetyllysine. The residue at position 165 (Lys-165) is an N6-succinyllysine. Residues 170 to 179 and 203 to 205 each bind FAD; these read IAMTELGAGS and FIS. Substrate is bound at residue Ser-179. 227 to 228 contributes to the substrate binding site; it reads AR. N6-succinyllysine is present on Lys-240. N6-acetyllysine; alternate occurs at positions 254 and 279. Residues Lys-254 and Lys-279 each carry the N6-succinyllysine; alternate modification. Substrate-binding positions include Tyr-282 and 289 to 292; that span reads PQER. Catalysis depends on Glu-291, which acts as the Proton acceptor. Arg-317 is a binding site for FAD. Lys-318 carries the post-translational modification N6-acetyllysine. An N6-acetyllysine; alternate modification is found at Lys-322. Lys-322 bears the N6-succinyllysine; alternate mark. Residue Gln-328 coordinates FAD. Lys-358 is modified (N6-acetyllysine). Position 362 is a phosphoserine (Ser-362). 385-389 provides a ligand contact to FAD; the sequence is QLHGG. 412 to 413 provides a ligand contact to substrate; it reads GG. FAD is bound at residue 414-416; that stretch reads TNE.

Belongs to the acyl-CoA dehydrogenase family. As to quaternary structure, homotetramer. It depends on FAD as a cofactor. Post-translationally, acetylation at Lys-318 and Lys-322 in proximity of the cofactor-binding sites strongly reduces catalytic activity. These sites are deacetylated by SIRT3.

Its subcellular location is the mitochondrion matrix. It carries out the reaction a long-chain 2,3-saturated fatty acyl-CoA + oxidized [electron-transfer flavoprotein] + H(+) = a long-chain (2E)-enoyl-CoA + reduced [electron-transfer flavoprotein]. The catalysed reaction is hexanoyl-CoA + oxidized [electron-transfer flavoprotein] + H(+) = (2E)-hexenoyl-CoA + reduced [electron-transfer flavoprotein]. The enzyme catalyses octanoyl-CoA + oxidized [electron-transfer flavoprotein] + H(+) = (2E)-octenoyl-CoA + reduced [electron-transfer flavoprotein]. It catalyses the reaction decanoyl-CoA + oxidized [electron-transfer flavoprotein] + H(+) = (2E)-decenoyl-CoA + reduced [electron-transfer flavoprotein]. It carries out the reaction dodecanoyl-CoA + oxidized [electron-transfer flavoprotein] + H(+) = (2E)-dodecenoyl-CoA + reduced [electron-transfer flavoprotein]. The catalysed reaction is tetradecanoyl-CoA + oxidized [electron-transfer flavoprotein] + H(+) = (2E)-tetradecenoyl-CoA + reduced [electron-transfer flavoprotein]. The enzyme catalyses oxidized [electron-transfer flavoprotein] + hexadecanoyl-CoA + H(+) = (2E)-hexadecenoyl-CoA + reduced [electron-transfer flavoprotein]. It catalyses the reaction octadecanoyl-CoA + oxidized [electron-transfer flavoprotein] + H(+) = (2E)-octadecenoyl-CoA + reduced [electron-transfer flavoprotein]. It carries out the reaction eicosanoyl-CoA + oxidized [electron-transfer flavoprotein] + H(+) = (2E)-eicosenoyl-CoA + reduced [electron-transfer flavoprotein]. The catalysed reaction is docosanoyl-CoA + oxidized [electron-transfer flavoprotein] + H(+) = (2E)-docosenoyl-CoA + reduced [electron-transfer flavoprotein]. The enzyme catalyses tetracosanoyl-CoA + oxidized [electron-transfer flavoprotein] + H(+) = (2E)-tetracosenoyl-CoA + reduced [electron-transfer flavoprotein]. It catalyses the reaction (5E)-tetradecenoyl-CoA + oxidized [electron-transfer flavoprotein] + H(+) = (2E,5E)-tetradecadienoyl-CoA + reduced [electron-transfer flavoprotein]. It carries out the reaction (5Z)-tetradecenoyl-CoA + oxidized [electron-transfer flavoprotein] + H(+) = (2E,5Z)-tetradecadienoyl-CoA + reduced [electron-transfer flavoprotein]. The catalysed reaction is oxidized [electron-transfer flavoprotein] + (9Z)-octadecenoyl-CoA + H(+) = (2E,9Z)-octadecadienoyl-CoA + reduced [electron-transfer flavoprotein]. Its pathway is lipid metabolism; mitochondrial fatty acid beta-oxidation. Functionally, long-chain specific acyl-CoA dehydrogenase is one of the acyl-CoA dehydrogenases that catalyze the first step of mitochondrial fatty acid beta-oxidation, an aerobic process breaking down fatty acids into acetyl-CoA and allowing the production of energy from fats. The first step of fatty acid beta-oxidation consists in the removal of one hydrogen from C-2 and C-3 of the straight-chain fatty acyl-CoA thioester, resulting in the formation of trans-2-enoyl-CoA. Among the different mitochondrial acyl-CoA dehydrogenases, long-chain specific acyl-CoA dehydrogenase can act on saturated and unsaturated acyl-CoAs with 6 to 24 carbons with a preference for 8 to 18 carbons long primary chains. The polypeptide is Long-chain specific acyl-CoA dehydrogenase, mitochondrial (Macaca fascicularis (Crab-eating macaque)).